The sequence spans 447 residues: N-succinylarginine dihydrolase (447 aa).

Substrate is bound by residues 19 to 28 (AGLSFGNEAS), Asn-110, and 137 to 138 (HR). The active site involves Glu-174. Arg-212 is a binding site for substrate. His-248 is a catalytic residue. Asp-250 and Asn-359 together coordinate substrate. Cys-365 serves as the catalytic Nucleophile.

The protein belongs to the succinylarginine dihydrolase family. In terms of assembly, homodimer.

The catalysed reaction is N(2)-succinyl-L-arginine + 2 H2O + 2 H(+) = N(2)-succinyl-L-ornithine + 2 NH4(+) + CO2. The protein operates within amino-acid degradation; L-arginine degradation via AST pathway; L-glutamate and succinate from L-arginine: step 2/5. Catalyzes the hydrolysis of N(2)-succinylarginine into N(2)-succinylornithine, ammonia and CO(2). The sequence is that of N-succinylarginine dihydrolase from Salmonella heidelberg (strain SL476).